A 514-amino-acid polypeptide reads, in one-letter code: Major capsid protein L1 (514 aa).

The disordered stretch occupies residues Val127–Thr147.

It belongs to the papillomaviridae L1 protein family. In terms of assembly, self-assembles into homopentamers. The capsid has an icosahedral symmetry and consists of 72 capsomers, with each capsomer being a pentamer of L1. Interacts with the minor capsid protein L2; this interaction is necessary for viral genome encapsidation. Interacts with protein E2; this interaction enhances E2-dependent replication and transcription activation.

It localises to the virion. The protein resides in the host nucleus. Its function is as follows. Forms an icosahedral capsid with a T=7 symmetry and a 50 nm diameter. The capsid is composed of 72 pentamers linked to each other by disulfide bonds and associated with L2 proteins. Binds to heparan sulfate proteoglycans on cell surface of basal layer keratinocytes to provide initial virion attachment. This binding mediates a conformational change in the virus capsid that facilitates efficient infection. The virion enters the host cell via endocytosis. During virus trafficking, L1 protein dissociates from the viral DNA and the genomic DNA is released to the host nucleus. The virion assembly takes place within the cell nucleus. Encapsulates the genomic DNA together with protein L2. This chain is Major capsid protein L1, found in Human papillomavirus type 8.